The sequence spans 639 residues: Probable endo-1,3(4)-beta-glucanase ACLA_073210 (639 aa).

A signal peptide spans 1 to 21 (MAPSSLLLSVGSLIASSLASA). In terms of domain architecture, GH16 spans 26–290 (IREQSQSYQL…WAGNVFGESG (265 aa)). N-linked (GlcNAc...) asparagine glycosylation is present at asparagine 65. Glutamate 146 (nucleophile) is an active-site residue. Glutamate 151 (proton donor) is an active-site residue. 2 disordered regions span residues 337–384 (TVAS…TVAE) and 442–545 (QSSS…GSSI). Residues 339–348 (ASPNTASEVH) show a composition bias toward polar residues. 2 stretches are compositionally biased toward low complexity: residues 362-376 (PTVP…VPPA) and 478-488 (TTTEAVAETET). Residue alanine 617 is the site of GPI-anchor amidated alanine attachment. Positions 618–639 (GARKLSVGLSGLVGALAVAALA) are cleaved as a propeptide — removed in mature form.

This sequence belongs to the glycosyl hydrolase 16 family.

It is found in the cell membrane. It catalyses the reaction Endohydrolysis of (1-&gt;3)- or (1-&gt;4)-linkages in beta-D-glucans when the glucose residue whose reducing group is involved in the linkage to be hydrolyzed is itself substituted at C-3.. Its function is as follows. Mixed-linked glucanase involved in the degradation of complex natural cellulosic substrates. The polypeptide is Probable endo-1,3(4)-beta-glucanase ACLA_073210 (Aspergillus clavatus (strain ATCC 1007 / CBS 513.65 / DSM 816 / NCTC 3887 / NRRL 1 / QM 1276 / 107)).